The primary structure comprises 318 residues: Aspartate carbamoyltransferase catalytic subunit (318 aa).

Positions 64 and 65 each coordinate carbamoyl phosphate. Lysine 92 provides a ligand contact to L-aspartate. The carbamoyl phosphate site is built by arginine 114, histidine 142, and glutamine 145. 2 residues coordinate L-aspartate: arginine 175 and arginine 229. Glycine 270 and proline 271 together coordinate carbamoyl phosphate.

This sequence belongs to the aspartate/ornithine carbamoyltransferase superfamily. ATCase family. As to quaternary structure, heterododecamer (2C3:3R2) of six catalytic PyrB chains organized as two trimers (C3), and six regulatory PyrI chains organized as three dimers (R2).

It carries out the reaction carbamoyl phosphate + L-aspartate = N-carbamoyl-L-aspartate + phosphate + H(+). It functions in the pathway pyrimidine metabolism; UMP biosynthesis via de novo pathway; (S)-dihydroorotate from bicarbonate: step 2/3. Catalyzes the condensation of carbamoyl phosphate and aspartate to form carbamoyl aspartate and inorganic phosphate, the committed step in the de novo pyrimidine nucleotide biosynthesis pathway. The chain is Aspartate carbamoyltransferase catalytic subunit from Rhodospirillum centenum (strain ATCC 51521 / SW).